The primary structure comprises 329 residues: Protein RecA (329 aa).

An ATP-binding site is contributed by 63-70; sequence GNESSGKT.

The protein belongs to the RecA family.

It localises to the cytoplasm. Can catalyze the hydrolysis of ATP in the presence of single-stranded DNA, the ATP-dependent uptake of single-stranded DNA by duplex DNA, and the ATP-dependent hybridization of homologous single-stranded DNAs. It interacts with LexA causing its activation and leading to its autocatalytic cleavage. The chain is Protein RecA from Malacoplasma penetrans (strain HF-2) (Mycoplasma penetrans).